A 419-amino-acid chain; its full sequence is UDP-N-acetylglucosamine 1-carboxyvinyltransferase 1 (419 aa).

22–23 (KN) contributes to the phosphoenolpyruvate binding site. Residue arginine 92 coordinates UDP-N-acetyl-alpha-D-glucosamine. The active-site Proton donor is cysteine 116. At cysteine 116 the chain carries 2-(S-cysteinyl)pyruvic acid O-phosphothioketal. UDP-N-acetyl-alpha-D-glucosamine-binding positions include 121–125 (RPIDL), aspartate 306, and isoleucine 328.

This sequence belongs to the EPSP synthase family. MurA subfamily.

It localises to the cytoplasm. The enzyme catalyses phosphoenolpyruvate + UDP-N-acetyl-alpha-D-glucosamine = UDP-N-acetyl-3-O-(1-carboxyvinyl)-alpha-D-glucosamine + phosphate. It functions in the pathway cell wall biogenesis; peptidoglycan biosynthesis. Its function is as follows. Cell wall formation. Adds enolpyruvyl to UDP-N-acetylglucosamine. This Streptococcus agalactiae serotype Ia (strain ATCC 27591 / A909 / CDC SS700) protein is UDP-N-acetylglucosamine 1-carboxyvinyltransferase 1.